The chain runs to 213 residues: Kynurenine formamidase (213 aa).

Trp20 serves as a coordination point for substrate. Residues His50, His54, and Asp56 each coordinate Zn(2+). His60 (proton donor/acceptor) is an active-site residue. Residues His161 and Glu173 each coordinate Zn(2+).

This sequence belongs to the Cyclase 1 superfamily. KynB family. Homodimer. Zn(2+) serves as cofactor.

The catalysed reaction is N-formyl-L-kynurenine + H2O = L-kynurenine + formate + H(+). Its pathway is amino-acid degradation; L-tryptophan degradation via kynurenine pathway; L-kynurenine from L-tryptophan: step 2/2. Catalyzes the hydrolysis of N-formyl-L-kynurenine to L-kynurenine, the second step in the kynurenine pathway of tryptophan degradation. The polypeptide is Kynurenine formamidase (Pseudomonas paraeruginosa (strain DSM 24068 / PA7) (Pseudomonas aeruginosa (strain PA7))).